A 199-amino-acid polypeptide reads, in one-letter code: Ribonuclease HII (199 aa).

In terms of domain architecture, RNase H type-2 spans 13 to 199 (GLVAGVDEVG…FAPIAKILCG (187 aa)). A divalent metal cation-binding residues include D19, E20, and D110.

It belongs to the RNase HII family. It depends on Mn(2+) as a cofactor. Mg(2+) serves as cofactor.

It is found in the cytoplasm. The enzyme catalyses Endonucleolytic cleavage to 5'-phosphomonoester.. Functionally, endonuclease that specifically degrades the RNA of RNA-DNA hybrids. This chain is Ribonuclease HII, found in Jannaschia sp. (strain CCS1).